The chain runs to 91 residues: Small ribosomal subunit protein uS19 (91 aa).

It belongs to the universal ribosomal protein uS19 family.

Protein S19 forms a complex with S13 that binds strongly to the 16S ribosomal RNA. This Chromohalobacter salexigens (strain ATCC BAA-138 / DSM 3043 / CIP 106854 / NCIMB 13768 / 1H11) protein is Small ribosomal subunit protein uS19.